The chain runs to 422 residues: Probable alpha-1,6-mannosyltransferase MNN11 (422 aa).

Residues 1-31 (MAIKPRTKGKTYSSRSVGSQWFNRLGFKQNK) are Cytoplasmic-facing. The chain crosses the membrane as a helical; Signal-anchor for type II membrane protein span at residues 32-52 (YGTCKFLSIITAFVFILYFFS). Residues 53–422 (NRFYPISRSA…GHMYQKIKKS (370 aa)) lie on the Lumenal side of the membrane.

The protein belongs to the glycosyltransferase 34 family. In terms of assembly, component of the M-Pol II complex composed of ANP1, MNN9, MNN10, MNN11 and HOC1.

It localises to the golgi apparatus. The protein resides in the cis-Golgi network membrane. Functionally, required for synthesis of full-length mannan chains. Its function is as follows. The M-Pol II complex possesses alpha-1,6-mannosyltransferase activity and is probably involved in the elongation of the mannan backbone of N-linked glycans on cell wall and periplasmic proteins. This is Probable alpha-1,6-mannosyltransferase MNN11 (MNN11) from Saccharomyces cerevisiae (strain ATCC 204508 / S288c) (Baker's yeast).